The chain runs to 1220 residues: Plasma membrane calcium-transporting ATPase 1 (1220 aa).

Glycine 2 bears the N-acetylglycine mark. Topologically, residues 2–105 (GDMANNSVAY…KTFLQLVWEA (104 aa)) are cytoplasmic. Serine 8 and serine 17 each carry phosphoserine. Residues 106–126 (LQDVTLIILEIAAIVSLGLSF) traverse the membrane as a helical segment. Residues 127-154 (YQPPEGDNALCGEVSVGEEEGEGETGWI) are Extracellular-facing. A helical membrane pass occupies residues 155–175 (EGAAILLSVVCVVLVTAFNDW). Residues 176–366 (SKEKQFRGLQ…KEKSVLQGKL (191 aa)) are Cytoplasmic-facing. Residues 297-356 (EEEKKDEKKKEKKNKKQDGAIENRNKAKAQDGAAMEMQPLKSEEGGDGDEKDKKKANLPK) form a disordered region. 2 stretches are compositionally biased toward basic and acidic residues: residues 312–325 (KQDG…KAKA) and 337–356 (KSEE…NLPK). Serine 338 bears the Phosphoserine mark. The helical transmembrane segment at 367-386 (TKLAVQIGKAGLLMSAITVI) threads the bilayer. The Extracellular segment spans residues 387 to 418 (ILVLYFVIDTFWVQKRPWLAECTPIYIQYFVK). A helical membrane pass occupies residues 419–439 (FFIIGVTVLVVAVPEGLPLAV). At 440–855 (TISLAYSVKK…RNVYDSISKF (416 aa)) the chain is on the cytoplasmic side. The active-site 4-aspartylphosphate intermediate is the aspartate 475. Mg(2+) contacts are provided by aspartate 475, threonine 477, and aspartate 797. Residues 856–876 (LQFQLTVNVVAVIVAFTGACI) form a helical membrane-spanning segment. The Extracellular portion of the chain corresponds to 877 to 882 (TQDSPL). A helical membrane pass occupies residues 883–903 (KAVQMLWVNLIMDTLASLALA). The Cytoplasmic segment spans residues 904 to 927 (TEPPTESLLLRKPYGRNKPLISRT). Residues 928 to 948 (MMKNILGHAFYQLVVVFTLLF) form a helical membrane-spanning segment. Topologically, residues 949–971 (AGEKFFDIDSGRNAPLHAPPSEH) are extracellular. Residues 972 to 991 (YTIVFNTFVLMQLFNEINAR) traverse the membrane as a helical segment. The Cytoplasmic segment spans residues 992-1005 (KIHGERNVFEGIFN). Residues 1006-1027 (NAIFCTIVLGTFVVQIIIVQFG) traverse the membrane as a helical segment. At 1028–1039 (GKPFSCSELSIE) the chain is on the extracellular side. A helical transmembrane segment spans residues 1040–1060 (QWLWSIFLGMGTLLWGQLIST). Residues 1061-1220 (IPTSRLKFLK…SPLHSLETSL (160 aa)) lie on the Cytoplasmic side of the membrane. Positions 1100-1117 (LRRGQILWFRGLNRIQTQ) are calmodulin-binding subdomain A. Position 1116 is a phosphothreonine; by PKC (threonine 1116). Residues 1118 to 1220 (IRVVNAFRSS…SPLHSLETSL (103 aa)) form a required for basolateral membrane targeting region. Residues serine 1140 and serine 1155 each carry the phosphoserine modification. The disordered stretch occupies residues 1160-1220 (PLIDDTDAED…SPLHSLETSL (61 aa)). Threonine 1165 is modified (phosphothreonine). A phosphoserine mark is found at serine 1178 and serine 1182. Residues 1200–1220 (MNKSATSSSPGSPLHSLETSL) are compositionally biased toward polar residues.

This sequence belongs to the cation transport ATPase (P-type) (TC 3.A.3) family. Type IIB subfamily. In terms of assembly, monomer. Dimer. Oligomer. Calmodulin binding. Interacts with PDZD11. Interacts with SLC35G1 and STIM1. Interacts with YWHAE; interacts with the monomeric and dimeric forms of the YWHAE but prefer the monomer form; this interaction inhibits calcium-transporting ATPase activity. Interacts with NPTN; this interaction stabilizes ATP2B1 and increases ATPase activity; this interaction controls T cell calcium homeostasis following T cell activation. Interacts with EPB41; regulates small intestinal calcium absorption through regulation of membrane expression of ATP2B1. Expressed in the retina, with strongest expression in the outer plexiform layer and lower expression levels in the inner nuclear layer and the inner plexiform layer. Specifically expressed in the following retinal cell types: photoreceptor cells, cone bipolar cells and horizontal cells. Expressed in osteoclasts (at protein level). Expressed at highest levels in brain, intestine, kidney, and stomach, and at lower levels in liver, lung, aorta, portal vein, urinary bladder, diaphragm, seminal vesicles and testes. Expressed in small intestinal epithelium.

The protein resides in the cell membrane. It is found in the basolateral cell membrane. It localises to the synapse. The protein localises to the presynaptic cell membrane. Its subcellular location is the cytoplasmic vesicle. The protein resides in the secretory vesicle. It is found in the synaptic vesicle membrane. The catalysed reaction is Ca(2+)(in) + ATP + H2O = Ca(2+)(out) + ADP + phosphate + H(+). Functionally, catalyzes the hydrolysis of ATP coupled with the transport of calcium from the cytoplasm to the extracellular space thereby maintaining intracellular calcium homeostasis. Plays a role in blood pressure regulation through regulation of intracellular calcium concentration and nitric oxide production leading to regulation of vascular smooth muscle cells vasoconstriction. Positively regulates bone mineralization through absorption of calcium from the intestine. Plays dual roles in osteoclast differentiation and survival by regulating RANKL-induced calcium oscillations in preosteoclasts and mediating calcium extrusion in mature osteoclasts. Regulates insulin sensitivity through calcium/calmodulin signaling pathway by regulating AKT1 activation and NOS3 activation in endothelial cells. May play a role in synaptic transmission by modulating calcium and proton dynamics at the synaptic vesicles. This Mus musculus (Mouse) protein is Plasma membrane calcium-transporting ATPase 1.